Here is a 355-residue protein sequence, read N- to C-terminus: Syntaxin-5 (355 aa).

Residues 1–333 (MIPRKRYGSK…KYFQSVTSNR (333 aa)) lie on the Cytoplasmic side of the membrane. A compositionally biased stretch (polar residues) spans 28–37 (PATAGSSSSD). The tract at residues 28 to 51 (PATAGSSSSDIAPLPPPVTLVPPP) is disordered. Positions 40–51 (PLPPPVTLVPPP) are enriched in pro residues. The short motif at 245–247 (IDM) is the IxM motif; signal for cargo packaging into COPII-coated vesicles element. The t-SNARE coiled-coil homology domain occupies 263–325 (DSYIQSRADT…EAAHSEILKY (63 aa)). Residues 287–318 (FQQLAHMVKEQEETIQRIDENVLGAQLDVEAA) are a coiled coil. A helical; Anchor for type IV membrane protein transmembrane segment spans residues 334-354 (WLMVKIFLILIVFFIIFVVFL). Position 355 (Ala355) is a topological domain, vesicular.

The protein belongs to the syntaxin family. Part of a ternary complex containing STX5A, NSFL1C and VCP. Identified in a unique SNARE complex composed of the Golgi SNAREs GOSR1, GOSR2, YKT6 and VTI1A. Component of a SNARE complex consisting of STX5, YKT6, GOSR1 and BET1L. Interacts with BET1L. Interacts with BET1. Interacts with COG4. Interacts with GM130/GOLGA2. Interacts (via IxM motif) with SEC24C and SEC24D; mediates STX5 packaging into COPII-coated vesicles. Interacts with VLDLR; this interaction mediates VLDLR translocation from the endoplasmic reticulum to the plasma membrane.

It localises to the endoplasmic reticulum-Golgi intermediate compartment membrane. The protein localises to the golgi apparatus membrane. Mediates endoplasmic reticulum to Golgi transport. Together with p115/USO1 and GM130/GOLGA2, involved in vesicle tethering and fusion at the cis-Golgi membrane to maintain the stacked and inter-connected structure of the Golgi apparatus. Functionally, required for Golgi to endoplasmic reticulum retrogade transport, and for intra-Golgi transport. Its function is as follows. (Microbial infection) Required for the efficient production of infectious virion during human cytomegalovirus infection. Mechanistically, participates in the formation of the cytoplasmic viral assembly compartment where tegument acquisition and envelopment occur. This is Syntaxin-5 (STX5) from Homo sapiens (Human).